The sequence spans 92 residues: Large ribosomal subunit protein uL24 (92 aa).

This sequence belongs to the universal ribosomal protein uL24 family. Part of the 50S ribosomal subunit.

In terms of biological role, one of two assembly initiator proteins, it binds directly to the 5'-end of the 23S rRNA, where it nucleates assembly of the 50S subunit. Functionally, one of the proteins that surrounds the polypeptide exit tunnel on the outside of the subunit. In Opitutus terrae (strain DSM 11246 / JCM 15787 / PB90-1), this protein is Large ribosomal subunit protein uL24.